Consider the following 324-residue polypeptide: Olfactory receptor 4K15 (324 aa).

The Extracellular segment spans residues 1-25; sequence MNETNHSRVTEFVLLGLSSSRELQP. N-linked (GlcNAc...) asparagine glycosylation is found at N2 and N5. A helical transmembrane segment spans residues 26-49; the sequence is FLFLTFSLLYLAILLGNFLIILTV. At 50-57 the chain is on the cytoplasmic side; the sequence is TSDSRLHT. A helical membrane pass occupies residues 58–79; sequence PMYFLLANLSFIDVCVASFATP. The Extracellular portion of the chain corresponds to 80–100; that stretch reads KMIADFLVERKTISFDACLAQ. The cysteines at positions 97 and 189 are disulfide-linked. The helical transmembrane segment at 101-120 threads the bilayer; sequence IFFVHLFTGSEMVLLVSMAY. The Cytoplasmic portion of the chain corresponds to 121 to 139; sequence DRYVAICKPLHYMTVMSRR. The helical transmembrane segment at 140–158 threads the bilayer; it reads VCVVLVLISWFVGFIHTTS. Over 159 to 195 the chain is Extracellular; the sequence is QLAFTVNLPFCGPNKVDSFFCDLPLVTKLACIDTYVV. The helical transmembrane segment at 196–219 threads the bilayer; it reads SLLIVADSGFLSLSSFLLLVVSYT. Topologically, residues 220-235 are cytoplasmic; sequence VILVTVRNRSSASMAK. Residues 236-258 traverse the membrane as a helical segment; it reads ARSTLTAHITVVTLFFGPCIFIY. Over 259–269 the chain is Extracellular; it reads VWPFSSYSVDK. A helical transmembrane segment spans residues 270–289; that stretch reads VLAVFYTIFTLILNPVIYTL. Topologically, residues 290–324 are cytoplasmic; sequence RNKEVKAAMSKLKSRYLKPSQVSVVIRNVLFLETK.

The protein belongs to the G-protein coupled receptor 1 family.

It is found in the cell membrane. Its function is as follows. Odorant receptor. In Homo sapiens (Human), this protein is Olfactory receptor 4K15 (OR4K15).